Reading from the N-terminus, the 167-residue chain is 3-isopropylmalate dehydratase small subunit (167 aa).

This sequence belongs to the LeuD family. LeuD type 2 subfamily. In terms of assembly, heterodimer of LeuC and LeuD.

The enzyme catalyses (2R,3S)-3-isopropylmalate = (2S)-2-isopropylmalate. It participates in amino-acid biosynthesis; L-leucine biosynthesis; L-leucine from 3-methyl-2-oxobutanoate: step 2/4. Catalyzes the isomerization between 2-isopropylmalate and 3-isopropylmalate, via the formation of 2-isopropylmaleate. The protein is 3-isopropylmalate dehydratase small subunit of Nitratidesulfovibrio vulgaris (strain ATCC 29579 / DSM 644 / CCUG 34227 / NCIMB 8303 / VKM B-1760 / Hildenborough) (Desulfovibrio vulgaris).